A 427-amino-acid polypeptide reads, in one-letter code: Glutamate-1-semialdehyde 2,1-aminomutase (427 aa).

The residue at position 265 (K265) is an N6-(pyridoxal phosphate)lysine.

Belongs to the class-III pyridoxal-phosphate-dependent aminotransferase family. HemL subfamily. As to quaternary structure, homodimer. It depends on pyridoxal 5'-phosphate as a cofactor.

It localises to the cytoplasm. It carries out the reaction (S)-4-amino-5-oxopentanoate = 5-aminolevulinate. Its pathway is porphyrin-containing compound metabolism; protoporphyrin-IX biosynthesis; 5-aminolevulinate from L-glutamyl-tRNA(Glu): step 2/2. The sequence is that of Glutamate-1-semialdehyde 2,1-aminomutase from Neisseria meningitidis serogroup A / serotype 4A (strain DSM 15465 / Z2491).